A 365-amino-acid chain; its full sequence is Aminomethyltransferase (365 aa).

This sequence belongs to the GcvT family. In terms of assembly, the glycine cleavage system is composed of four proteins: P, T, L and H.

The enzyme catalyses N(6)-[(R)-S(8)-aminomethyldihydrolipoyl]-L-lysyl-[protein] + (6S)-5,6,7,8-tetrahydrofolate = N(6)-[(R)-dihydrolipoyl]-L-lysyl-[protein] + (6R)-5,10-methylene-5,6,7,8-tetrahydrofolate + NH4(+). In terms of biological role, the glycine cleavage system catalyzes the degradation of glycine. The sequence is that of Aminomethyltransferase from Frankia alni (strain DSM 45986 / CECT 9034 / ACN14a).